The sequence spans 591 residues: Aspartate--tRNA(Asp/Asn) ligase (591 aa).

Glu-174 lines the L-aspartate pocket. The interval 198 to 201 (QLFK) is aspartate. Arg-220 serves as a coordination point for L-aspartate. ATP-binding positions include 220–222 (RDE) and Gln-229. His-450 lines the L-aspartate pocket. An ATP-binding site is contributed by Glu-483. Arg-490 contacts L-aspartate. 535 to 538 (GLDR) contacts ATP.

It belongs to the class-II aminoacyl-tRNA synthetase family. Type 1 subfamily. Homodimer.

It is found in the cytoplasm. The catalysed reaction is tRNA(Asx) + L-aspartate + ATP = L-aspartyl-tRNA(Asx) + AMP + diphosphate. Functionally, aspartyl-tRNA synthetase with relaxed tRNA specificity since it is able to aspartylate not only its cognate tRNA(Asp) but also tRNA(Asn). Reaction proceeds in two steps: L-aspartate is first activated by ATP to form Asp-AMP and then transferred to the acceptor end of tRNA(Asp/Asn). In Pseudomonas syringae pv. syringae (strain B728a), this protein is Aspartate--tRNA(Asp/Asn) ligase.